The following is a 269-amino-acid chain: 2-dehydro-3-deoxyphosphooctonate aldolase (269 aa).

Belongs to the KdsA family.

It localises to the cytoplasm. It carries out the reaction D-arabinose 5-phosphate + phosphoenolpyruvate + H2O = 3-deoxy-alpha-D-manno-2-octulosonate-8-phosphate + phosphate. Its pathway is carbohydrate biosynthesis; 3-deoxy-D-manno-octulosonate biosynthesis; 3-deoxy-D-manno-octulosonate from D-ribulose 5-phosphate: step 2/3. It functions in the pathway bacterial outer membrane biogenesis; lipopolysaccharide biosynthesis. The polypeptide is 2-dehydro-3-deoxyphosphooctonate aldolase (Chlamydia felis (strain Fe/C-56) (Chlamydophila felis)).